The chain runs to 359 residues: MAPPAVLSKSGVIYGKDVKDLFDYAQEKGFAIPAINVTSSSTVVAALEAARDNKAPIILQTSQGGAAYFAGKGVDNKDQAASIAGSIAAAHYIRAIAPTYGIPVVLHTDHCAKKLLPWFDGMLKADEEFFAKTGTPLFSSHMLDLSEETDDENIATCAKYFERMAKMGQWLEMEIGITGGEEDGVNNEHVEKDALYTSPETVFAVYESLHKISPNFSIAAAFGNVHGVYKPGNVQLRPEILGDHQVYAKKQIGTDAKHPLYLVFHGGSGSTQEEFNTAIKNGVVKVNLDTDCQYAYLTGIRDYVTNKIEYLKAPVGNPEGADKPNKKYFDPRVWVREGEKTMSKRIAEALDIFHTKGQL.

Position 62 (S62) interacts with D-glyceraldehyde 3-phosphate. Residue D109 is the Proton donor of the active site. Zn(2+) is bound by residues H110, D144, E174, and H226. G227 contacts dihydroxyacetone phosphate. Zn(2+) is bound at residue H265. Residues 266–268 and 287–290 contribute to the dihydroxyacetone phosphate site; these read GGS and NLDT.

It belongs to the class II fructose-bisphosphate aldolase family. In terms of assembly, homodimer. The cofactor is Zn(2+).

It is found in the cytoplasm. The catalysed reaction is beta-D-fructose 1,6-bisphosphate = D-glyceraldehyde 3-phosphate + dihydroxyacetone phosphate. The protein operates within carbohydrate degradation; glycolysis; D-glyceraldehyde 3-phosphate and glycerone phosphate from D-glucose: step 4/4. Its function is as follows. Catalyzes the aldol condensation of dihydroxyacetone phosphate (DHAP or glycerone-phosphate) with glyceraldehyde 3-phosphate (G3P) to form fructose 1,6-bisphosphate (FBP) in gluconeogenesis and the reverse reaction in glycolysis. The protein is Fructose-bisphosphate aldolase (FBA1) of Candida albicans (strain SC5314 / ATCC MYA-2876) (Yeast).